Here is a 132-residue protein sequence, read N- to C-terminus: Small ribosomal subunit protein uS8 (132 aa).

This sequence belongs to the universal ribosomal protein uS8 family. As to quaternary structure, part of the 30S ribosomal subunit. Contacts proteins S5 and S12.

Functionally, one of the primary rRNA binding proteins, it binds directly to 16S rRNA central domain where it helps coordinate assembly of the platform of the 30S subunit. The protein is Small ribosomal subunit protein uS8 of Cereibacter sphaeroides (strain ATCC 17025 / ATH 2.4.3) (Rhodobacter sphaeroides).